Here is a 346-residue protein sequence, read N- to C-terminus: MTEQRTIASSATREDEAADASIRPKRLADYLGQQPVRDQMEIYIQAAKARGEAMDHVLIFGPPGLGKTTLSHVIANELGVSLRVTSGPVIEKAGDLAALLTNLQPHDVLFIDEIHRLSPVVEEVLYPAMEDFQIDIMIGDGPAARSIKIDLPPFTLIGATTRAGLLTAPLRDRFGIVQRLEFYSPQELTRIVIRSAAILGIDCTPDGAAEIARRARGTPRIANRLLRRVRDFAQVKAAGHIDLAVAQAAMQMLKVDPEGFDELDRRMLRTIVDHFDGGPVGVESLAASLSEERGTLEDVIEPYLIQQGFLIRTARGRMVTPKAYLHLGLKPPRDRAPAIGEPGDLF.

Over residues 1 to 11 (MTEQRTIASSA) the composition is skewed to polar residues. The disordered stretch occupies residues 1–20 (MTEQRTIASSATREDEAADA). Residues 1–183 (MTEQRTIASS…FGIVQRLEFY (183 aa)) form a large ATPase domain (RuvB-L) region. Residues Ile-22, Arg-23, Gly-64, Lys-67, Thr-68, Thr-69, 130–132 (EDF), Arg-173, Tyr-183, and Arg-220 each bind ATP. A Mg(2+)-binding site is contributed by Thr-68. A small ATPAse domain (RuvB-S) region spans residues 184 to 254 (SPQELTRIVI…VAQAAMQMLK (71 aa)). Residues 257-346 (PEGFDELDRR…PAIGEPGDLF (90 aa)) form a head domain (RuvB-H) region. 3 residues coordinate DNA: Arg-293, Arg-312, and Arg-317.

This sequence belongs to the RuvB family. Homohexamer. Forms an RuvA(8)-RuvB(12)-Holliday junction (HJ) complex. HJ DNA is sandwiched between 2 RuvA tetramers; dsDNA enters through RuvA and exits via RuvB. An RuvB hexamer assembles on each DNA strand where it exits the tetramer. Each RuvB hexamer is contacted by two RuvA subunits (via domain III) on 2 adjacent RuvB subunits; this complex drives branch migration. In the full resolvosome a probable DNA-RuvA(4)-RuvB(12)-RuvC(2) complex forms which resolves the HJ.

Its subcellular location is the cytoplasm. It catalyses the reaction ATP + H2O = ADP + phosphate + H(+). Its function is as follows. The RuvA-RuvB-RuvC complex processes Holliday junction (HJ) DNA during genetic recombination and DNA repair, while the RuvA-RuvB complex plays an important role in the rescue of blocked DNA replication forks via replication fork reversal (RFR). RuvA specifically binds to HJ cruciform DNA, conferring on it an open structure. The RuvB hexamer acts as an ATP-dependent pump, pulling dsDNA into and through the RuvAB complex. RuvB forms 2 homohexamers on either side of HJ DNA bound by 1 or 2 RuvA tetramers; 4 subunits per hexamer contact DNA at a time. Coordinated motions by a converter formed by DNA-disengaged RuvB subunits stimulates ATP hydrolysis and nucleotide exchange. Immobilization of the converter enables RuvB to convert the ATP-contained energy into a lever motion, pulling 2 nucleotides of DNA out of the RuvA tetramer per ATP hydrolyzed, thus driving DNA branch migration. The RuvB motors rotate together with the DNA substrate, which together with the progressing nucleotide cycle form the mechanistic basis for DNA recombination by continuous HJ branch migration. Branch migration allows RuvC to scan DNA until it finds its consensus sequence, where it cleaves and resolves cruciform DNA. This Xanthomonas campestris pv. campestris (strain B100) protein is Holliday junction branch migration complex subunit RuvB.